We begin with the raw amino-acid sequence, 61 residues long: MAKTSMIIKAQRGNKFKVRERNRCPLCGRPRAYYRKFDMCRICLRKLSNLGQVPGVIKSSW.

4 residues coordinate Zn(2+): cysteine 24, cysteine 27, cysteine 40, and cysteine 43.

It belongs to the universal ribosomal protein uS14 family. Zinc-binding uS14 subfamily. As to quaternary structure, part of the 30S ribosomal subunit. Contacts proteins S3 and S10. It depends on Zn(2+) as a cofactor.

In terms of biological role, binds 16S rRNA, required for the assembly of 30S particles and may also be responsible for determining the conformation of the 16S rRNA at the A site. This chain is Small ribosomal subunit protein uS14, found in Geobacter sp. (strain M21).